A 295-amino-acid chain; its full sequence is Golgi-associated RAB2 interactor protein 1A (295 aa).

Residues 187–206 (MPNSSTETTPESSRPASSQS) form a disordered region. Over residues 190–206 (SSTETTPESSRPASSQS) the composition is skewed to low complexity. 4 positions are modified to phosphoserine: Ser-220, Ser-221, Ser-251, and Ser-255.

The protein belongs to the GARIN family. Interacts (via N-terminus) with RAB2B (in GTP-bound form).

The protein resides in the golgi apparatus. In terms of biological role, RAB2B effector protein required for accurate acrosome formation and normal male fertility. This Rattus norvegicus (Rat) protein is Golgi-associated RAB2 interactor protein 1A (Garin1a).